Consider the following 30-residue polypeptide: AYPGNGVHCGKYSCTVDKQTAIGNIGNNAA.

An intrachain disulfide couples Cys-9 to Cys-14.

Its subcellular location is the secreted. In terms of biological role, has antibacterial activity against the Gram-positive bacterium L.monocytogenes. This Latilactobacillus curvatus (Lactobacillus curvatus) protein is Bacteriocin curvaticin.